We begin with the raw amino-acid sequence, 394 residues long: MSKEKFERTKPHVNVGTIGHVDHGKTTLTAAICTVLAKVYGGKARDFASIDNAPEERERGITINTSHVEYDTPNRHYAHVDCPGHADYVKNMITGAAQMDGGILVVAATDGRMPQTREHILLGRQVGIPYIIVFMNKCDMVDDEELLELVEMEVRELLSEYDFPGDDLPVIQGSALGALNGEAQWEAKIVELAEALDTYIPEPERAVDMAFLMPIEDVFSIQGRGTVVTGRIERGILKVGDEVAIVGIKETVKTTCTGVEMFRKLLDEGRAGENVGALLRGTKREEVERGQVLAKPGSITPHTKFESEVYVLSKDEGGRHTPFFKGYRPQFYFRTTDVTGSIELPEGVEMVMPGDNVKMVVDLIAPIAMDEGLRFAIREGGRTVGAGVVAKIIA.

In terms of domain architecture, tr-type G spans 10-204 (KPHVNVGTIG…ALDTYIPEPE (195 aa)). The G1 stretch occupies residues 19–26 (GHVDHGKT). A GTP-binding site is contributed by 19–26 (GHVDHGKT). Threonine 26 serves as a coordination point for Mg(2+). A G2 region spans residues 60 to 64 (GITIN). The tract at residues 81-84 (DCPG) is G3. Residues 81 to 85 (DCPGH) and 136 to 139 (NKCD) contribute to the GTP site. A G4 region spans residues 136 to 139 (NKCD). The tract at residues 174–176 (SAL) is G5.

Belongs to the TRAFAC class translation factor GTPase superfamily. Classic translation factor GTPase family. EF-Tu/EF-1A subfamily. In terms of assembly, monomer.

The protein localises to the cytoplasm. It carries out the reaction GTP + H2O = GDP + phosphate + H(+). In terms of biological role, GTP hydrolase that promotes the GTP-dependent binding of aminoacyl-tRNA to the A-site of ribosomes during protein biosynthesis. This is Elongation factor Tu-A from Vibrio cholerae serotype O1 (strain ATCC 39315 / El Tor Inaba N16961).